Consider the following 223-residue polypeptide: 2-C-methyl-D-erythritol 4-phosphate cytidylyltransferase (223 aa).

Belongs to the IspD/TarI cytidylyltransferase family. IspD subfamily.

The enzyme catalyses 2-C-methyl-D-erythritol 4-phosphate + CTP + H(+) = 4-CDP-2-C-methyl-D-erythritol + diphosphate. Its pathway is isoprenoid biosynthesis; isopentenyl diphosphate biosynthesis via DXP pathway; isopentenyl diphosphate from 1-deoxy-D-xylulose 5-phosphate: step 2/6. Its function is as follows. Catalyzes the formation of 4-diphosphocytidyl-2-C-methyl-D-erythritol from CTP and 2-C-methyl-D-erythritol 4-phosphate (MEP). In Prochlorococcus marinus subsp. pastoris (strain CCMP1986 / NIES-2087 / MED4), this protein is 2-C-methyl-D-erythritol 4-phosphate cytidylyltransferase.